A 267-amino-acid chain; its full sequence is Dihydropteroate synthase (267 aa).

The Pterin-binding domain maps to 1–251; sequence MTKTKIMGIL…NVELNAKLAK (251 aa). Residue N11 coordinates Mg(2+). (7,8-dihydropterin-6-yl)methyl diphosphate-binding positions include T51, D84, N103, D167, K203, and 239-241; that span reads RVH.

The protein belongs to the DHPS family. In terms of assembly, homodimer. The cofactor is Mg(2+).

The catalysed reaction is (7,8-dihydropterin-6-yl)methyl diphosphate + 4-aminobenzoate = 7,8-dihydropteroate + diphosphate. It participates in cofactor biosynthesis; tetrahydrofolate biosynthesis; 7,8-dihydrofolate from 2-amino-4-hydroxy-6-hydroxymethyl-7,8-dihydropteridine diphosphate and 4-aminobenzoate: step 1/2. Its function is as follows. Catalyzes the condensation of para-aminobenzoate (pABA) with 6-hydroxymethyl-7,8-dihydropterin diphosphate (DHPt-PP) to form 7,8-dihydropteroate (H2Pte), the immediate precursor of folate derivatives. The chain is Dihydropteroate synthase (folP) from Staphylococcus aureus (strain Mu50 / ATCC 700699).